A 458-amino-acid polypeptide reads, in one-letter code: Argininosuccinate lyase (458 aa).

Belongs to the lyase 1 family. Argininosuccinate lyase subfamily.

It is found in the cytoplasm. It carries out the reaction 2-(N(omega)-L-arginino)succinate = fumarate + L-arginine. The protein operates within amino-acid biosynthesis; L-arginine biosynthesis; L-arginine from L-ornithine and carbamoyl phosphate: step 3/3. The protein is Argininosuccinate lyase of Salmonella dublin (strain CT_02021853).